A 73-amino-acid chain; its full sequence is Large ribosomal subunit protein bL31 (73 aa).

This sequence belongs to the bacterial ribosomal protein bL31 family. Type A subfamily. Part of the 50S ribosomal subunit.

Binds the 23S rRNA. This is Large ribosomal subunit protein bL31 from Bartonella bacilliformis (strain ATCC 35685 / KC583 / Herrer 020/F12,63).